Reading from the N-terminus, the 289-residue chain is CBY1-interacting BAR domain-containing protein 1 (289 aa).

Residues 1-47 constitute a mitochondrion transit peptide; sequence MMRRTLENRNAQTKQLQTAVSNVEKHFGELCQIFAAYVRKTARLRDK. The segment at 10–220 is BAR-like; that stretch reads NAQTKQLQTA…NIDEDEDLEV (211 aa). Positions 107–178 form a coiled coil; that stretch reads KMKRDDLKAT…INNFERQKMK (72 aa). Positions 265–289 are disordered; sequence LRKDQQAEDDEDDELDVTEEENFLK. Acidic residues predominate over residues 271-289; the sequence is AEDDEDDELDVTEEENFLK.

Belongs to the CIBAR family. Homodimer (via BAR-like domain). Heterodimer with FAM92B (via BAR-like domains). Interacts (via BAR-like domain) with CBY1; this interaction is required for targeting FAM92A to centriole and cilium basal body. Interacts (via BAR-like domain) with CBY3; both proteins form a ninefold symmetric structure at the flagellar base; are recruited to the annulus in a mutually dependent manner and regulate annulus positionning.

The protein localises to the cytoplasm. It is found in the cytoskeleton. The protein resides in the microtubule organizing center. It localises to the centrosome. Its subcellular location is the centriole. The protein localises to the cilium basal body. It is found in the cell projection. The protein resides in the cilium. It localises to the nucleus. Its subcellular location is the mitochondrion inner membrane. The protein localises to the flagellum. In terms of biological role, plays a critical role in regulating mitochondrial ultrastructure and function by maintaining the integrity of mitochondrial morphology, particularly the organization of cristae. Preferentially binds to negatively charged phospholipids like cardiolipin and phosphatidylinositol 4,5-bisphosphate enhancing its interaction with mitochondrial membranes. Induces membrane curvature and tubulation, which are critical for maintaining mitochondrial ultrastructure and the organization of cristae. Plays a crucial role in ciliogenesis. May play a role in limb development through its role in ciliogenesis. Plays a key role in the correct positioning of the annulus, a septin-based ring structure in the sperm flagellum, serving both as a physical barrier and a membrane diffusion barrier that separates the midpiece (MP) from the principal piece (PP). This positioning is essential for proper sperm motility and function. Interacts with CBY3 to form a complex which localizes to the curved membrane region of the flagellar pocket. By doing so, may provide stability and rigidity to the periannular membrane to prevent membrane deformation. This function is crucial for halting annulus migration at the proximal end of the fibrous sheath-containing PP. The chain is CBY1-interacting BAR domain-containing protein 1 from Homo sapiens (Human).